A 450-amino-acid polypeptide reads, in one-letter code: Trehalose/maltose-binding protein MalE (450 aa).

An N-terminal signal peptide occupies residues methionine 1–glycine 24. Residues glutamate 57, threonine 84, arginine 89, aspartate 110, tyrosine 161, aspartate 163, tyrosine 217, glutamate 279, tryptophan 297, tyrosine 299, glycine 334, tryptophan 335, tryptophan 371, and arginine 404 each contribute to the alpha,alpha-trehalose site.

Belongs to the bacterial solute-binding protein 1 family. In terms of assembly, the complex is composed of two ATP-binding proteins (MalK), two transmembrane proteins (MalG and MalF) and a solute-binding protein (MalE). Post-translationally, glycosylated.

The protein resides in the cell membrane. Functionally, part of the ABC transporter complex MalEFGK involved in trehalose/maltose import. Binds maltose and trehalose. This Thermococcus litoralis (strain ATCC 51850 / DSM 5473 / JCM 8560 / NS-C) protein is Trehalose/maltose-binding protein MalE (malE).